Here is a 353-residue protein sequence, read N- to C-terminus: Aliphatic aldoxime dehydratase (353 aa).

An an aliphatic aldoxime-binding site is contributed by S219. A heme b-binding site is contributed by H299. An aliphatic aldoxime is bound at residue H320. The active site involves H320.

The protein belongs to the heme-containing dehydratase family. In terms of assembly, homodimer. The cofactor is heme b.

The enzyme catalyses an aliphatic aldoxime = a nitrile + H2O. Active when the heme iron is in the ferrous state. Activated by FMN, Fe(2+), Sn(2+), Na(2)SO(3), Na(2)S and vitamin K3. In terms of biological role, catalyzes the dehydration of aldoximes to their corresponding nitrile. Is active toward various arylalkyl- and alkyl-aldoximes, and to a lesser extent toward aryl-aldoximes. The chain is Aliphatic aldoxime dehydratase from Rhodococcus globerulus.